The sequence spans 395 residues: Glutamate N-acetyltransferase (395 aa).

The substrate site is built by Thr-146, Lys-169, Thr-180, Glu-263, Asn-390, and Thr-395. The active-site Nucleophile is the Thr-180.

Belongs to the ArgJ family. In terms of assembly, heterotetramer of two alpha and two beta chains.

The protein localises to the cytoplasm. The enzyme catalyses N(2)-acetyl-L-ornithine + L-glutamate = N-acetyl-L-glutamate + L-ornithine. The protein operates within amino-acid biosynthesis; L-arginine biosynthesis; L-ornithine and N-acetyl-L-glutamate from L-glutamate and N(2)-acetyl-L-ornithine (cyclic): step 1/1. Functionally, catalyzes the transfer of the acetyl group from N(2)-acetylornithine to glutamate, forming N-acetylglutamate and L-ornithine. The protein is Glutamate N-acetyltransferase of Methanosarcina mazei (strain ATCC BAA-159 / DSM 3647 / Goe1 / Go1 / JCM 11833 / OCM 88) (Methanosarcina frisia).